The primary structure comprises 378 residues: Succinyl-diaminopimelate desuccinylase (378 aa).

Position 66 (His66) interacts with Zn(2+). Asp68 is an active-site residue. A Zn(2+)-binding site is contributed by Asp99. Glu133 functions as the Proton acceptor in the catalytic mechanism. Zn(2+)-binding residues include Glu134, Glu162, and His348.

Belongs to the peptidase M20A family. DapE subfamily. In terms of assembly, homodimer. Zn(2+) serves as cofactor. It depends on Co(2+) as a cofactor.

The enzyme catalyses N-succinyl-(2S,6S)-2,6-diaminopimelate + H2O = (2S,6S)-2,6-diaminopimelate + succinate. Its pathway is amino-acid biosynthesis; L-lysine biosynthesis via DAP pathway; LL-2,6-diaminopimelate from (S)-tetrahydrodipicolinate (succinylase route): step 3/3. Catalyzes the hydrolysis of N-succinyl-L,L-diaminopimelic acid (SDAP), forming succinate and LL-2,6-diaminopimelate (DAP), an intermediate involved in the bacterial biosynthesis of lysine and meso-diaminopimelic acid, an essential component of bacterial cell walls. This is Succinyl-diaminopimelate desuccinylase from Halorhodospira halophila (strain DSM 244 / SL1) (Ectothiorhodospira halophila (strain DSM 244 / SL1)).